The chain runs to 322 residues: Ferredoxin--NADP reductase (322 aa).

FAD is bound by residues L87, F119, D279, and T320.

Belongs to the ferredoxin--NADP reductase type 2 family. As to quaternary structure, homodimer. Requires FAD as cofactor.

The enzyme catalyses 2 reduced [2Fe-2S]-[ferredoxin] + NADP(+) + H(+) = 2 oxidized [2Fe-2S]-[ferredoxin] + NADPH. This chain is Ferredoxin--NADP reductase, found in Streptococcus suis (strain 98HAH33).